Consider the following 302-residue polypeptide: TATA-box-binding protein (302 aa).

2 disordered regions span residues 1 to 22 (MEQN…GAMT) and 50 to 81 (SLLE…QTPQ). Residues 50-70 (SLLEEQQRQQQQQQAASQQQG) show a composition bias toward low complexity. Repeat copies occupy residues 128-204 (LQNI…ARVV) and 218-295 (IQNM…YPIL).

This sequence belongs to the TBP family. In terms of tissue distribution, enriched in testis but hardly detectable in the ovary (at protein level).

The protein localises to the nucleus. In terms of biological role, general transcription factor that functions at the core of the DNA-binding multiprotein factor TFIID. Binding of TFIID to the TATA box is the initial transcriptional step of the pre-initiation complex (PIC), playing a role in the activation of eukaryotic genes transcribed by RNA polymerase II. Members of the TBP family are differentially required for transcription and development during early embryogenesis. Regulates mRNA levels in the early embryo by both transcriptional and post-transcriptional mechanisms. Required for transcription of a subset of genes at the mid-blastula transition (MBT). Negatively regulates the expression of other embryonic genes, including autoregulation of the tbp promoter itself. Also functions within a transcription-dependent mechanism to direct the temporally-regulated degradation of a subset of maternal mRNAs after the MBT. This is part of a general mechanism to regulate the maternal to zygotic transition and is required for normal embryonic development. Binds to promoters of a subset of genes. Required for gastrulation. In Danio rerio (Zebrafish), this protein is TATA-box-binding protein.